Consider the following 20-residue polypeptide: Ferric reductase A (20 aa).

In terms of assembly, monomer.

It catalyses the reaction 2 a Fe(II)-siderophore + NAD(+) + H(+) = 2 a Fe(III)-siderophore + NADH. Its function is as follows. Reductase activity that acts on Fe(3+)-chelates and NADH as an electron donor and requires the presence of FMN for full activity. May play a role in iron uptake. The chain is Ferric reductase A (ferA) from Paracoccus denitrificans.